Consider the following 56-residue polypeptide: Large ribosomal subunit protein bL33c (56 aa).

This sequence belongs to the bacterial ribosomal protein bL33 family.

The protein resides in the plastid. Its subcellular location is the chloroplast. The polypeptide is Large ribosomal subunit protein bL33c (rpl33) (Guillardia theta (Cryptophyte)).